The sequence spans 690 residues: Glycine--tRNA ligase beta subunit (690 aa).

Belongs to the class-II aminoacyl-tRNA synthetase family. In terms of assembly, tetramer of two alpha and two beta subunits.

The protein localises to the cytoplasm. The enzyme catalyses tRNA(Gly) + glycine + ATP = glycyl-tRNA(Gly) + AMP + diphosphate. The polypeptide is Glycine--tRNA ligase beta subunit (Desulfitobacterium hafniense (strain DSM 10664 / DCB-2)).